Reading from the N-terminus, the 539-residue chain is Probable 1,4-beta-D-glucan cellobiohydrolase B (539 aa).

An N-terminal signal peptide occupies residues 1–26 (MLPSTISYRIYKNALFFAALFGAVQA). The interval 27–461 (QKVGTSKAEV…SNIKVGPIGS (435 aa)) is catalytic. Asparagine 90 is a glycosylation site (N-linked (GlcNAc...) asparagine). Glutamate 238 serves as the catalytic Nucleophile. Catalysis depends on glutamate 243, which acts as the Proton donor. Asparagine 296 and asparagine 495 each carry an N-linked (GlcNAc...) asparagine glycan. The tract at residues 462 to 503 (TFNSGGSNPGGSTTTTKPATSTTTTKATTTATTNTTGPTGTG) is thr-rich linker. Residues 462-503 (TFNSGGSNPGGSTTTTKPATSTTTTKATTTATTNTTGPTGTG) are compositionally biased toward low complexity. The segment at 462-504 (TFNSGGSNPGGSTTTTKPATSTTTTKATTTATTNTTGPTGTGV) is disordered. Positions 503–539 (GVAQPWAQCGGIGYSGPTQCAAPYTCTKQNDYYSQCL) constitute a CBM1 domain. Intrachain disulfides connect cysteine 511–cysteine 528 and cysteine 522–cysteine 538.

This sequence belongs to the glycosyl hydrolase 7 (cellulase C) family.

It localises to the secreted. The catalysed reaction is Hydrolysis of (1-&gt;4)-beta-D-glucosidic linkages in cellulose and cellotetraose, releasing cellobiose from the non-reducing ends of the chains.. Its function is as follows. The biological conversion of cellulose to glucose generally requires three types of hydrolytic enzymes: (1) Endoglucanases which cut internal beta-1,4-glucosidic bonds; (2) Exocellobiohydrolases that cut the disaccharide cellobiose from the non-reducing end of the cellulose polymer chain; (3) Beta-1,4-glucosidases which hydrolyze the cellobiose and other short cello-oligosaccharides to glucose. The chain is Probable 1,4-beta-D-glucan cellobiohydrolase B (cbhB) from Aspergillus clavatus (strain ATCC 1007 / CBS 513.65 / DSM 816 / NCTC 3887 / NRRL 1 / QM 1276 / 107).